Consider the following 530-residue polypeptide: Inactive ubiquitin carboxyl-terminal hydrolase 17-like protein 4 (530 aa).

Residues A80–K375 form the USP domain. Residues S382–R392 are compositionally biased toward basic and acidic residues. 2 disordered regions span residues S382–R410 and N493–Q530. Residues T495–G510 are compositionally biased toward polar residues. Basic residues predominate over residues R511–R524.

The protein belongs to the peptidase C19 family. USP17 subfamily.

It localises to the nucleus. The protein localises to the endoplasmic reticulum. This Homo sapiens (Human) protein is Inactive ubiquitin carboxyl-terminal hydrolase 17-like protein 4 (USP17L4).